Here is a 212-residue protein sequence, read N- to C-terminus: Ribonuclease HII (212 aa).

The RNase H type-2 domain maps to Met-1–Gln-205. Residues Asp-7, Glu-8, and Asp-100 each contribute to the a divalent metal cation site.

It belongs to the RNase HII family. Mn(2+) is required as a cofactor. Mg(2+) serves as cofactor.

Its subcellular location is the cytoplasm. The enzyme catalyses Endonucleolytic cleavage to 5'-phosphomonoester.. Its function is as follows. Endonuclease that specifically degrades the RNA of RNA-DNA hybrids. The sequence is that of Ribonuclease HII from Methanocorpusculum labreanum (strain ATCC 43576 / DSM 4855 / Z).